The primary structure comprises 1770 residues: MAQQQQQQQQQQHLQHPHQNTNSNNQLQQQQQQLQLQLQLQLQEQQEQQQQQLQLQQYNNNFYSQNYNMEEYERRKRREREKIERQQGIQIDDRETALFSEPRRLTEGDAEITAALGEFGDARVYINQSTVGISRHAPGAGNPRLQAPPPPKTLGHSHSPSSSSAAGSGSGSALPGQSQSQQQQQKQHYQQQQQQQRPPGYLKQADNKPPYNGRGGYPGQPMKNDIPSSSGMAPPRGPPRSGSGSISNSNSNSSSATNNATGGAAGTTPLGPPLSTQMPNGREKSFLGPPAPALHNGAGLFVPPAASKRPGGGSGAGLQPPPPEKDITKMISEMTNSFRVTAPLTSIAATPHAPTRENYNLNGPNTNKYAFGPIGSPPIGSQPSSLMAPLFAPIAPIASPITSLLTTPPHASQGSLGGASPVAPLQQLPPTPPKAAAALSPTAAAKPLKTEKNHTLEKQDSCLENDLELSESEDEQRKKESRSAGNSSNSSESDSSESGSESSSKGDHQQQHHHHNHHHQQQQQQLQQQQQQQLLQQKQQHQQILQQQQRQLTANGSKKKYSHSIIAGGGSTISGLLTSSGFGSGGAGNGGCSTASSGGGGGGSGSGGGSGSSSGIGTMSSGSSSNKTPSPTESNKWTLSRFFPKPANQTSSESVSPGNVSMKVPGILPGGAQIIPESIEVTTAIVKNEKIHDDHMDMDEVEEEDEDEEQLQQQQQLRYGAGLSVTPVAVAVKKEALDGVGEMGGLPAIPKNQIKREAEALHSAARLSDSGTSGSGSTSSSSSSSDSAPGEVVPMPGPGETLQLPGVPAAITTVMRVHPTLMQKAPPNSVTLTPILPLPASPKQRQKKPRKKKPATSAPILDSSDDDDPPAAKHALELSAAAAAAAQAQATATVPPLAVKKGRGRPRKQQQSGGSGNLSSASAGSSSQTKGPTLTAAKKPLVKGPAMANSRKRDHSSQSSSNGNTPTKKLAMGTGTGTGTAMAVPMTVIPSGPANASAVAAASSSSDEDSSSSTGSTGSKSSSSSSSSDDTETTQNTKCRIVKLNKTGAVPPLARLGAVASAGAGAGAGASGSSSPSSSSSEPEDHLAMSTVSALPMAQQLMQPYKPRAVSQHSQQLSSSECSSSSGSSTSGDEDEAKREKERERKRKSDKNKISTLTRIFNPKEGGAKKQGQVVIMDQSEEQQQVKVGDSSSQPVPVQNAAIAKLRMTPTQQQQQLGAGLASPARTTTPHLTSLICKIDLSKLSRERIMRLKKLTPSQQNGHLTPKDLVTIQTQGPSQPVQGHLLPAKVKHEHPHPVKPEPELDAGYESKFKPGNVKQEFQLKQERDRERERERDRDRERERERERDREREREQPTGGRRRKRSSSSSSSPYKEKKRKKEKSDHLQISKDQLLPVPVLLPSNNHERISCHERLSFDKLQLLHEDAAAVAAAAAAVSAPNGSPSKKLLVMSPLPPPPTAVVVPPAVVAPSTCSEAVQTTPPSAAATATAATSTTGTSTAPPAPVTRLIYRSYFDREEEPHSDDHRKNNQFLVEAVNRKHAADSERDSFNQVTLYLEAVVYFLLTADSMERSSSEQATWTIYKDTLSLIKFISSKFRPYQQSTNGQHETHNKVAILSLRCQSLISLKLYKLRRTNCRTVINSLTEFFRTGRGDIVNGNTPSSISPSNSVGSQGSGSNTPPGKIVPQEIHTQLSKQNEYLTYVNSAHELWDQADRLVRTGNHIDFFRELDHENGPLTLHSTMPEVFRYVQAGLKTLRDAVSHPTQQTLHQSH.

Composition is skewed to low complexity over residues 1–19 (MAQQQQQQQQQQHLQHPHQ), 154–204 (LGHS…YLKQ), and 227–269 (PSSS…GTTP). 6 disordered regions span residues 1–28 (MAQQQQQQQQQQHLQHPHQNTNSNNQLQ), 134–327 (SRHA…EKDI), 402–660 (TSLL…PGNV), 761–805 (LHSA…LQLP), 822–1173 (MQKA…KQGQ), and 1291–1390 (KHEH…QISK). Residues 402–414 (TSLLTTPPHASQG) are compositionally biased toward polar residues. The span at 434–447 (KAAAALSPTAAAKP) shows a compositional bias: low complexity. The span at 448 to 461 (LKTEKNHTLEKQDS) shows a compositional bias: basic and acidic residues. The span at 463 to 474 (LENDLELSESED) shows a compositional bias: acidic residues. A phosphoserine mark is found at serine 470 and serine 472. The segment covering 483-503 (SAGNSSNSSESDSSESGSESS) has biased composition (low complexity). Residues 511-520 (QHHHHNHHHQ) show a composition bias toward basic residues. The span at 521–552 (QQQQQLQQQQQQQLLQQKQQHQQILQQQQRQL) shows a compositional bias: low complexity. Residues 582 to 614 (FGSGGAGNGGCSTASSGGGGGGSGSGGGSGSSS) show a composition bias toward gly residues. The segment covering 615-625 (GIGTMSSGSSS) has biased composition (low complexity). 2 stretches are compositionally biased toward polar residues: residues 626–638 (NKTPSPTESNKWT) and 647–659 (ANQTSSESVSPGN). Residues 768-800 (SDSGTSGSGSTSSSSSSSDSAPGEVVPMPGPGE) are compositionally biased toward low complexity. Residues 844–854 (QRQKKPRKKKP) are compositionally biased toward basic residues. Phosphoserine occurs at positions 863 and 864. 5 stretches are compositionally biased toward low complexity: residues 880–893 (AAAAAAAQAQATAT), 909–928 (QQQSGGSGNLSSASAGSSSQ), 994–1028 (ANASAVAAASSSSDEDSSSSTGSTGSKSSSSSSSS), 1071–1081 (SGSSSPSSSSS), and 1111–1131 (SQHSQQLSSSECSSSSGSSTS). Residues 900 to 912 (KKGRGRPRKQQQS) constitute a DNA-binding region (a.T hook). Phosphoserine occurs at positions 920 and 922. 2 stretches are compositionally biased toward basic and acidic residues: residues 1295-1312 (PHPVKPEPELDAGYESKF) and 1321-1355 (FQLKQERDRERERERDRDRERERERERDREREREQ). Phosphoserine is present on serine 1442. Low complexity-rich tracts occupy residues 1483–1499 (AAATATAATSTTGTSTA) and 1656–1676 (GNTPSSISPSNSVGSQGSGSN). Disordered regions lie at residues 1483 to 1502 (AAATATAATSTTGTSTAPPA) and 1656 to 1683 (GNTPSSISPSNSVGSQGSGSNTPPGKIV).

This sequence belongs to the AF4 family.

The protein resides in the nucleus. Its function is as follows. Has a role in transcriptional regulation. Acts in parallel with the Ras/MAPK and the PI3K/PKB pathways in the control of cell identity and cellular growth. Essential for regulation of the cytoskeleton and cell growth but not for cell proliferation or growth rate. Required specifically for the microtubule-based basal transport of lipid droplets. Plays a partially redundant function downstream of Raf in cell fate specification in the developing eye. Pair-rule protein that regulates embryonic cellularization, gastrulation and segmentation. The sequence is that of AF4/FMR2 family member lilli from Drosophila pseudoobscura pseudoobscura (Fruit fly).